A 456-amino-acid chain; its full sequence is uncharacterized protein (456 aa).

11 helical membrane-spanning segments follow: residues 12 to 32 (SFIWGAPLLILLSGTGLYLTL), 63 to 83 (FAALCTALAATIGTGNIVGVA), 86 to 106 (VQAGGPGAIFWMWLVALLGMA), 143 to 163 (WLAKLFALFGVMVAFFGIGTF), 179 to 199 (IPVLVTAIIVTLLVGLIILGG), 208 to 228 (SVIVPFMAILYVTTSLVIILL), 237 to 257 (ILLIIDSAFDPQAALGGAVGL), 305 to 325 (FLDTIIVCTMTGIVLVLTGAW), 348 to 368 (IGATIVTVGLLFFAFTTILGW), 390 to 410 (LAYIMLVGLGAFLHLNLIWII), and 414 to 434 (VNGLMAFPNLIALIGLRKVII).

Belongs to the alanine or glycine:cation symporter (AGCS) (TC 2.A.25) family.

The protein resides in the cell inner membrane. This is an uncharacterized protein from Haemophilus influenzae (strain ATCC 51907 / DSM 11121 / KW20 / Rd).